Reading from the N-terminus, the 500-residue chain is NAD(P)H-quinone oxidoreductase chain 4, chloroplastic (500 aa).

14 helical membrane passes run 4-24, 35-55, 87-107, 113-130, 134-154, 167-187, 211-231, 242-262, 272-292, 305-325, 330-350, 386-406, 416-436, and 462-482; these read FPWL…MLFL, YTIC…CYNF, IGTI…AFPV, LFHF…GSFS, LLLF…LLSM, FILY…GISL, IILY…IPLH, HYST…YGLV, AHSL…IYAA, IAYS…SITD, GAIL…FLAG, LALP…GIIT, IFII…LLSM, and LFLS…PDFV.

Belongs to the complex I subunit 4 family.

Its subcellular location is the plastid. The protein localises to the chloroplast thylakoid membrane. The enzyme catalyses a plastoquinone + NADH + (n+1) H(+)(in) = a plastoquinol + NAD(+) + n H(+)(out). The catalysed reaction is a plastoquinone + NADPH + (n+1) H(+)(in) = a plastoquinol + NADP(+) + n H(+)(out). In Aethionema cordifolium (Lebanon stonecress), this protein is NAD(P)H-quinone oxidoreductase chain 4, chloroplastic.